We begin with the raw amino-acid sequence, 159 residues long: Probable histone H2A.5 (159 aa).

Over residues 1-10 the composition is skewed to gly residues; sequence MDAAGAGAGG. Disordered stretches follow at residues 1–29 and 136–159; these read MDAAGAGAGGKLKKGAAGRKAGGPRKKAV and EKAAAAGKEAKSPKKAAGKSPKKA. 2 stretches are compositionally biased toward basic residues: residues 11-29 and 148-159; these read KLKKGAAGRKAGGPRKKAV and PKKAAGKSPKKA. 2 short sequence motifs (SPKK motif) span residues 147 to 150 and 155 to 158; these read SPKK.

The protein belongs to the histone H2A family. The nucleosome is a histone octamer containing two molecules each of H2A, H2B, H3 and H4 assembled in one H3-H4 heterotetramer and two H2A-H2B heterodimers. The octamer wraps approximately 147 bp of DNA.

It localises to the nucleus. The protein localises to the chromosome. In terms of biological role, core component of nucleosome. Nucleosomes wrap and compact DNA into chromatin, limiting DNA accessibility to the cellular machineries which require DNA as a template. Histones thereby play a central role in transcription regulation, DNA repair, DNA replication and chromosomal stability. DNA accessibility is regulated via a complex set of post-translational modifications of histones, also called histone code, and nucleosome remodeling. The sequence is that of Probable histone H2A.5 from Oryza sativa subsp. indica (Rice).